The following is a 247-amino-acid chain: tRNA uridine(34) hydroxylase (247 aa).

One can recognise a Rhodanese domain in the interval 124–218 (TKQDVIVIDT…YLEDTQNKNN (95 aa)). The Cysteine persulfide intermediate role is filled by C178.

It belongs to the TrhO family.

The catalysed reaction is uridine(34) in tRNA + AH2 + O2 = 5-hydroxyuridine(34) in tRNA + A + H2O. In terms of biological role, catalyzes oxygen-dependent 5-hydroxyuridine (ho5U) modification at position 34 in tRNAs. This Rickettsia massiliae (strain Mtu5) protein is tRNA uridine(34) hydroxylase.